A 412-amino-acid chain; its full sequence is CCA-adding enzyme (412 aa).

ATP is bound by residues Ser41 and Lys44. Residues Ser41 and Lys44 each contribute to the CTP site. Residues Asp53, Asp55, and Asp106 each contribute to the Mg(2+) site. Residues His129, Lys149, and Tyr158 each coordinate ATP. Positions 129, 149, and 158 each coordinate CTP.

It belongs to the tRNA nucleotidyltransferase/poly(A) polymerase family. Archaeal CCA-adding enzyme subfamily. In terms of assembly, homodimer. Forms a tetramer upon binding two tRNAs. However, tRNA-induced tetramer formation is not required for CCA addition. Mg(2+) is required as a cofactor.

It carries out the reaction a tRNA precursor + 2 CTP + ATP = a tRNA with a 3' CCA end + 3 diphosphate. The enzyme catalyses a tRNA with a 3' CCA end + 2 CTP + ATP = a tRNA with a 3' CCACCA end + 3 diphosphate. Catalyzes the addition and repair of the essential 3'-terminal CCA sequence in tRNAs without using a nucleic acid template. Adds these three nucleotides in the order of C, C, and A to the tRNA nucleotide-73, using CTP and ATP as substrates and producing inorganic pyrophosphate. tRNA 3'-terminal CCA addition is required both for tRNA processing and repair. Also involved in tRNA surveillance by mediating tandem CCA addition to generate a CCACCA at the 3' terminus of unstable tRNAs. While stable tRNAs receive only 3'-terminal CCA, unstable tRNAs are marked with CCACCA and rapidly degraded. The structural flexibility of RNA controls the choice between CCA versus CCACCA addition: following the first CCA addition cycle, nucleotide-binding to the active site triggers a clockwise screw motion, producing torque on the RNA. This ejects stable RNAs, whereas unstable RNAs are refolded while bound to the enzyme and subjected to a second CCA catalytic cycle. This Saccharolobus shibatae (strain ATCC 51178 / DSM 5389 / JCM 8931 / NBRC 15437 / B12) (Sulfolobus shibatae) protein is CCA-adding enzyme.